A 280-amino-acid chain; its full sequence is 2-dehydro-3-deoxyphosphooctonate aldolase (280 aa).

The protein belongs to the KdsA family.

The protein localises to the cytoplasm. It carries out the reaction D-arabinose 5-phosphate + phosphoenolpyruvate + H2O = 3-deoxy-alpha-D-manno-2-octulosonate-8-phosphate + phosphate. The protein operates within carbohydrate biosynthesis; 3-deoxy-D-manno-octulosonate biosynthesis; 3-deoxy-D-manno-octulosonate from D-ribulose 5-phosphate: step 2/3. Its pathway is bacterial outer membrane biogenesis; lipopolysaccharide biosynthesis. The protein is 2-dehydro-3-deoxyphosphooctonate aldolase of Thioalkalivibrio sulfidiphilus (strain HL-EbGR7).